A 193-amino-acid chain; its full sequence is Peptidyl-tRNA hydrolase (193 aa).

Tyr16 is a tRNA binding site. His21 functions as the Proton acceptor in the catalytic mechanism. TRNA is bound by residues Phe67, Asn69, and Asn115.

Belongs to the PTH family. Monomer.

The protein resides in the cytoplasm. The catalysed reaction is an N-acyl-L-alpha-aminoacyl-tRNA + H2O = an N-acyl-L-amino acid + a tRNA + H(+). Functionally, hydrolyzes ribosome-free peptidyl-tRNAs (with 1 or more amino acids incorporated), which drop off the ribosome during protein synthesis, or as a result of ribosome stalling. Its function is as follows. Catalyzes the release of premature peptidyl moieties from peptidyl-tRNA molecules trapped in stalled 50S ribosomal subunits, and thus maintains levels of free tRNAs and 50S ribosomes. The chain is Peptidyl-tRNA hydrolase from Psychrobacter cryohalolentis (strain ATCC BAA-1226 / DSM 17306 / VKM B-2378 / K5).